The following is a 286-amino-acid chain: Small ribosomal subunit protein uS15m (286 aa).

The transit peptide at 1–33 (MSIVGRNAILNLRISLCPLFMGKRSFVSSPVSN) directs the protein to the mitochondrion.

This sequence belongs to the universal ribosomal protein uS15 family. As to quaternary structure, component of the mitochondrial small ribosomal subunit (mt-SSU). Mature yeast 74S mitochondrial ribosomes consist of a small (37S) and a large (54S) subunit. The 37S small subunit contains a 15S ribosomal RNA (15S mt-rRNA) and 34 different proteins. The 54S large subunit contains a 21S rRNA (21S mt-rRNA) and 46 different proteins. Post-translationally, the precursor is processed in two steps involving mitochondrial intermediate peptidase (MIP) and mitochondrial processing peptidase (MPP).

It localises to the mitochondrion. Functionally, component of the mitochondrial ribosome (mitoribosome), a dedicated translation machinery responsible for the synthesis of mitochondrial genome-encoded proteins, including at least some of the essential transmembrane subunits of the mitochondrial respiratory chain. The mitoribosomes are attached to the mitochondrial inner membrane and translation products are cotranslationally integrated into the membrane. The protein is Small ribosomal subunit protein uS15m (MRPS28) of Saccharomyces cerevisiae (strain ATCC 204508 / S288c) (Baker's yeast).